We begin with the raw amino-acid sequence, 621 residues long: MMKSFFSAAALLLGLVAPSAVLAAPSLPGVPREVTRDLLRPVEERQSSCHTAANRACWAPGFDINTDYEVSTPNTGVTRTYTLTLTEVDNWLGPDGVVKQKVMLVNGDIFGPTITANWGDWIQVNVINNLRTNGTSIHWHGLHQKGTNMHDGANGVTECPIPPKGGSRIYRFRAQQYGTSWYHSHFSAQYGNGVVGTIVVNGPASVPYDIDLGVFPITDYYHKPADVLVEETMNGGPPPSDTVLFKGHGKNPQTGAGKFANVTLTPGKRHRLRIINTSTHDHFQLKLQNHTMTIIAADMVPVQAQTVDSLFLAVGQRYDVTIDANKSVGNYWFNATFGGGLACGASLNPHPAAVFRYQGAPNTLPTNIGTPAADANCMDLNNLTPVVSRSVPTSGFTPRPNNTLPVSLTLGGTPLFVWKVNGSSINVDWDKPIVDYVIAQNTSYPPQANVITVNSVNQWTYWLIENDPTGPFSIPHPMHLHGHDFLVVGRSPDQPAGVPQTRYRFNPATDMALLKSSNPVRRDVAMLPANGWLLIAFKSDNPGAWLFHCHIAWHVSGGLSVQYLERPNDLRNGFSQADKNQHNNNCNAWRAYWPTNPFPKIDSGLKVKKWVGEHPDWYIKN.

Positions 1-23 (MMKSFFSAAALLLGLVAPSAVLA) are cleaved as a signal peptide. The propeptide occupies 24 to 48 (APSLPGVPREVTRDLLRPVEERQSS). Cysteine 49 and cysteine 57 are oxidised to a cystine. Plastocyanin-like domains lie at 78 to 201 (TRTY…IVVN) and 210 to 367 (IDLG…LPTN). An N-linked (GlcNAc...) asparagine glycan is attached at asparagine 133. 4 residues coordinate Cu cation: histidine 138, histidine 140, histidine 183, and histidine 185. Cystine bridges form between cysteine 159/cysteine 586 and cysteine 343/cysteine 377. 5 N-linked (GlcNAc...) asparagine glycosylation sites follow: asparagine 261, asparagine 276, asparagine 289, asparagine 325, and asparagine 334. 3 N-linked (GlcNAc...) asparagine glycosylation sites follow: asparagine 401, asparagine 421, and asparagine 441. Residues 430 to 566 (DKPIVDYVIA…GGLSVQYLER (137 aa)) form the Plastocyanin-like 3 domain. Positions 476, 479, 481, 548, 549, 550, and 554 each coordinate Cu cation. A propeptide spanning residues 606–621 (KVKKWVGEHPDWYIKN) is cleaved from the precursor.

The protein belongs to the multicopper oxidase family. Monomer. Cu cation is required as a cofactor. In terms of processing, proteolytically processed at both its N-terminus and its C-terminus.

The protein resides in the secreted. It carries out the reaction 4 hydroquinone + O2 = 4 benzosemiquinone + 2 H2O. Its function is as follows. Probably involved in lignin degradation and in the detoxification of lignin-derived products in its natural habitat (herbivorous dung), which is rich in lignin of grasses and straw. Probably involved in melanin synthesis and in perithecia development. The chain is Laccase-2 (LAC2) from Podospora anserina (Pleurage anserina).